The following is a 422-amino-acid chain: Phytoene synthase 1, chloroplastic (422 aa).

Residues 1-70 (MSSSVAVLWV…NRSRRIGVVS (70 aa)) constitute a chloroplast transit peptide.

It belongs to the phytoene/squalene synthase family. In terms of assembly, monomer. Interacts with OR. Interacts with ORLIKE.

The protein localises to the plastid. It localises to the chloroplast membrane. It catalyses the reaction 2 (2E,6E,10E)-geranylgeranyl diphosphate = 15-cis-phytoene + 2 diphosphate. It functions in the pathway carotenoid biosynthesis; phytoene biosynthesis; all-trans-phytoene from geranylgeranyl diphosphate: step 1/1. In terms of biological role, catalyzes the reaction from prephytoene diphosphate to phytoene. The protein is Phytoene synthase 1, chloroplastic of Arabidopsis thaliana (Mouse-ear cress).